A 1076-amino-acid chain; its full sequence is MAANAGMVAGSRNRNEFVMIRPDGDAPPPAKPGKSVNGQVCQICGDTVGVSATGDVFVACNECAFPVCRPCYEYERKEGNQCCPQCKTRYKRHKGSPRVQGDEEEEDVDDLDNEFNYKHGNGKGPEWQIQRQGEDVDLSSSSRHEQHRIPRLTSGQQISGEIPDASPDRHSIRSGTSSYVDPSVPVPVRIVDPSKDLNSYGINSVDWQERVASWRNKQDKNMMQVANKYPEARGGDMEGTGSNGEDMQMVDDARLPLSRIVPIPSNQLNLYRIVIILRLIILMFFFQYRVTHPVRDAYGLWLVSVICEIWFALSWLLDQFPKWYPINRETYLDRLALRYDREGEPSQLAPIDVFVSTVDPLKEPPLITANTVLSILAVDYPVDKVSCYVSDDGSAMLTFEALSETAEFARKWVPFCKKHNIEPRAPEFYFAQKIDYLKDKIQPSFVKERRAMKREYEEFKVRINALVAKAQKVPEEGWTMADGTAWPGNNPRDHPGMIQVFLGHSGGLDTDGNELPRLVYVSREKRPGFQHHKKAGAMNALIRVSAVLTNGAYLLNVDCDHYFNSSKALREAMCFMMDPALGRKTCYVQFPQRFDGIDLHDRYANRNIVFFDINMKGLDGIQGPVYVGTGCCFNRQALYGYDPVLTEADLEPNIVVKSCCGGRKKKSKSYMDSKNRMMKRTESSAPIFNMEDIEEGIEGYEDERSVLMSQKRLEKRFGQSPIFIASTFMTQGGIPPSTNPASLLKEAIHVISCGYEDKTEWGKEIGWIYGSVTEDILTGFKMHARGWISIYCMPPRPCFKGSAPINLSDRLNQVLRWALGSVEILLSRHCPIWYGYNGRLKLLERLAYINTIVYPITSIPLIAYCVLPAICLLTNKFIIPEISNYAGMFFILLFASIFATGILELRWSGVGIEDWWRNEQFWVIGGTSAHLFAVFQGLLKVLAGIDTNFTVTSKASDEDGDFAELYVFKWTSLLIPPTTVLVINLVGMVAGISYAINSGYQSWGPLFGKLFFSIWVILHLYPFLKGLMGRQNRTPTIVIVWSILLASIFSLLWVKIDPFISPTQKAVALGQCGVNC.

Over 1–267 (MAANAGMVAG…SRIVPIPSNQ (267 aa)) the chain is Cytoplasmic. Residues Cys41, Cys44, Cys60, Cys63, Cys68, Cys71, Cys83, and Cys86 each contribute to the Zn(2+) site. An RING-type; degenerate zinc finger spans residues 41 to 87 (CQICGDTVGVSATGDVFVACNECAFPVCRPCYEYERKEGNQCCPQCK). Positions 119–179 (HGNGKGPEWQ…HSIRSGTSSY (61 aa)) are disordered. A helical membrane pass occupies residues 268–288 (LNLYRIVIILRLIILMFFFQY). The Extracellular portion of the chain corresponds to 289 to 296 (RVTHPVRD). Residues 297–317 (AYGLWLVSVICEIWFALSWLL) traverse the membrane as a helical segment. At 318–851 (DQFPKWYPIN…LLERLAYINT (534 aa)) the chain is on the cytoplasmic side. Residues Ser356, Lys362, Glu363, and Asp392 each contribute to the UDP-alpha-D-glucose site. Asp392 is an active-site residue. A coiled-coil region spans residues 446–473 (VKERRAMKREYEEFKVRINALVAKAQKV). A UDP-alpha-D-glucose-binding site is contributed by Lys533. Mn(2+) is bound by residues Lys534 and Asp558. Residue Asp775 is part of the active site. Residues 852–872 (IVYPITSIPLIAYCVLPAICL) traverse the membrane as a helical segment. The Extracellular portion of the chain corresponds to 873-884 (LTNKFIIPEISN). The helical transmembrane segment at 885-905 (YAGMFFILLFASIFATGILEL) threads the bilayer. Topologically, residues 906–920 (RWSGVGIEDWWRNEQ) are cytoplasmic. Residues 921 to 941 (FWVIGGTSAHLFAVFQGLLKV) traverse the membrane as a helical segment. Residues 942 to 971 (LAGIDTNFTVTSKASDEDGDFAELYVFKWT) lie on the Extracellular side of the membrane. Residue Asn948 is glycosylated (N-linked (GlcNAc...) asparagine). Residues 972–992 (SLLIPPTTVLVINLVGMVAGI) form a helical membrane-spanning segment. The Cytoplasmic portion of the chain corresponds to 993 to 1003 (SYAINSGYQSW). The chain crosses the membrane as a helical span at residues 1004–1024 (GPLFGKLFFSIWVILHLYPFL). Residues 1025-1033 (KGLMGRQNR) lie on the Extracellular side of the membrane. A helical membrane pass occupies residues 1034–1054 (TPTIVIVWSILLASIFSLLWV). The Cytoplasmic segment spans residues 1055–1076 (KIDPFISPTQKAVALGQCGVNC).

This sequence belongs to the glycosyltransferase 2 family. Plant cellulose synthase subfamily. It depends on Zn(2+) as a cofactor. Mn(2+) serves as cofactor.

The protein localises to the cell membrane. The catalysed reaction is [(1-&gt;4)-beta-D-glucosyl](n) + UDP-alpha-D-glucose = [(1-&gt;4)-beta-D-glucosyl](n+1) + UDP + H(+). It participates in glycan metabolism; plant cellulose biosynthesis. Functionally, catalytic subunit of cellulose synthase terminal complexes ('rosettes'), required for beta-1,4-glucan microfibril crystallization, a major mechanism of the cell wall formation. The polypeptide is Probable cellulose synthase A catalytic subunit 1 [UDP-forming] (CESA1) (Oryza sativa subsp. indica (Rice)).